The chain runs to 298 residues: HTH-type transcriptional regulator CzcR (298 aa).

Residues 11–68 (MELRDLQIFQSVADQGSVSSAAKELNYVQSNVTARIKQLENELKTPLFYRHKRGMTLT) form the HTH lysR-type domain. The H-T-H motif DNA-binding region spans 28-47 (VSSAAKELNYVQSNVTARIK).

It belongs to the LysR transcriptional regulatory family.

In Bacillus thuringiensis (strain Al Hakam), this protein is HTH-type transcriptional regulator CzcR (czcR).